Reading from the N-terminus, the 97-residue chain is Small ribosomal subunit protein bS20 (97 aa).

Belongs to the bacterial ribosomal protein bS20 family.

Binds directly to 16S ribosomal RNA. This is Small ribosomal subunit protein bS20 from Gloeothece citriformis (strain PCC 7424) (Cyanothece sp. (strain PCC 7424)).